Here is a 140-residue protein sequence, read N- to C-terminus: Endoribonuclease YbeY (140 aa).

Positions 99, 103, and 109 each coordinate Zn(2+).

It belongs to the endoribonuclease YbeY family. The cofactor is Zn(2+).

The protein localises to the cytoplasm. Single strand-specific metallo-endoribonuclease involved in late-stage 70S ribosome quality control and in maturation of the 3' terminus of the 16S rRNA. The sequence is that of Endoribonuclease YbeY from Wolinella succinogenes (strain ATCC 29543 / DSM 1740 / CCUG 13145 / JCM 31913 / LMG 7466 / NCTC 11488 / FDC 602W) (Vibrio succinogenes).